A 501-amino-acid chain; its full sequence is Cytochrome P450 4d2 (501 aa).

Heme-binding residues include glutamate 311 and cysteine 449.

Belongs to the cytochrome P450 family. Heme is required as a cofactor.

It is found in the endoplasmic reticulum membrane. Its subcellular location is the microsome membrane. Involved in the metabolism of insect hormones and in the breakdown of synthetic insecticides. This chain is Cytochrome P450 4d2 (Cyp4d2), found in Drosophila melanogaster (Fruit fly).